A 90-amino-acid chain; its full sequence is Large ribosomal subunit protein uL23c (90 aa).

Belongs to the universal ribosomal protein uL23 family. Part of the 50S ribosomal subunit.

The protein localises to the plastid. The protein resides in the chloroplast. Its function is as follows. Binds to 23S rRNA. This Psilotum nudum (Whisk fern) protein is Large ribosomal subunit protein uL23c (rpl23).